A 147-amino-acid polypeptide reads, in one-letter code: Membrane-spanning 4-domains subfamily A member 6E (147 aa).

Over 1–52 the chain is Cytoplasmic; the sequence is MTSQPISNETIIMLPSNVINFSQAEKPEPTNQGQDSLKKRLQAKVKVIGVHS. Residues 53–73 form a helical membrane-spanning segment; sequence SLAGSILSALSALVGFILLSV. Over 74 to 120 the chain is Extracellular; the sequence is NPAALNPASLQCKLDEKDIPTRLLLSYDYHSPYTMDCHRAKASLAGT. The chain crosses the membrane as a helical span at residues 121–141; it reads LSLMLVSTVLEFCLAVLTAVL. The Cytoplasmic portion of the chain corresponds to 142 to 147; the sequence is QWKQTV.

The protein belongs to the MS4A family. Expressed by malignant and fetal tissue at very low levels.

The protein resides in the membrane. In terms of biological role, may be involved in signal transduction as a component of a multimeric receptor complex. This chain is Membrane-spanning 4-domains subfamily A member 6E (MS4A6E), found in Homo sapiens (Human).